Reading from the N-terminus, the 270-residue chain is Plasmanylethanolamine desaturase 1 (270 aa).

3 helical membrane-spanning segments follow: residues 47 to 67, 74 to 94, and 161 to 181; these read WCSV…LLLL, PLVI…SGLV, and ALEQ…FGTF. The Histidine box-1 motif lies at 186–190; it reads HKWSH. The Histidine box-2 signature appears at 213–217; that stretch reads HHRIH.

Belongs to the fatty acid desaturase CarF family.

The protein localises to the endoplasmic reticulum membrane. It catalyses the reaction a 1-(1,2-saturated alkyl)-2-acyl-sn-glycero-3-phosphoethanolamine + 2 Fe(II)-[cytochrome b5] + O2 + 2 H(+) = a 1-O-(1Z-alkenyl)-2-acyl-sn-glycero-3-phosphoethanolamine + 2 Fe(III)-[cytochrome b5] + 2 H2O. It carries out the reaction a 1-O-hexadecyl-2-acyl-sn-glycero-3-phosphoethanolamine + 2 Fe(II)-[cytochrome b5] + O2 + 2 H(+) = a 1-O-(1Z-hexadecenyl)-2-acyl-sn-glycero-3-phosphoethanolamine + 2 Fe(III)-[cytochrome b5] + 2 H2O. The catalysed reaction is a 1-O-octadecyl-2-acyl-sn-glycero-3-phosphoethanolamine + 2 Fe(II)-[cytochrome b5] + O2 + 2 H(+) = a 1-O-(1Z-octadecenyl)-2-acyl-sn-glycero-3-phosphoethanolamine + 2 Fe(III)-[cytochrome b5] + 2 H2O. The enzyme catalyses a 1-O-(9Z-octadecenyl)-2-acyl-sn-glycero-3-phosphoethanolamine + 2 Fe(II)-[cytochrome b5] + O2 + 2 H(+) = a 1-O-(1Z,9Z-octadecadienyl)-2-acyl-sn-glycero-3-phosphoethanolamine + 2 Fe(III)-[cytochrome b5] + 2 H2O. The protein operates within lipid metabolism; fatty acid metabolism. Its function is as follows. Plasmanylethanolamine desaturase involved in plasmalogen biogenesis in the endoplasmic reticulum membrane. Plasmalogens are glycerophospholipids with a hydrocarbon chain linked by a vinyl ether bond at the glycerol sn-1 position, and are involved in antioxidative and signaling mechanisms. The protein is Plasmanylethanolamine desaturase 1 of Homo sapiens (Human).